The primary structure comprises 610 residues: UvrABC system protein C (610 aa).

Residues 13–92 (TLPGVYLMKN…IKQHKPRYNA (80 aa)) enclose the GIY-YIG domain. Positions 204-239 (KDVLKDLYEEMRLLSEQLEFEKANHLLRTIRYIEKT) constitute a UVR domain.

This sequence belongs to the UvrC family. In terms of assembly, interacts with UvrB in an incision complex.

Its subcellular location is the cytoplasm. In terms of biological role, the UvrABC repair system catalyzes the recognition and processing of DNA lesions. UvrC both incises the 5' and 3' sides of the lesion. The N-terminal half is responsible for the 3' incision and the C-terminal half is responsible for the 5' incision. The polypeptide is UvrABC system protein C (Protochlamydia amoebophila (strain UWE25)).